Reading from the N-terminus, the 150-residue chain is Cytochrome c oxidase subunit 5A, mitochondrial (150 aa).

The N-terminal 41 residues, 1-41 (MLGAALRRCAVAATTRADPRGLLHSARTPGPAVAIQSVRCY), are a transit peptide targeting the mitochondrion. The SIFI-degron motif lies at 2 to 17 (LGAALRRCAVAATTRA). N6-acetyllysine occurs at positions 87 and 113. Residue Thr-141 is modified to Phosphothreonine.

This sequence belongs to the cytochrome c oxidase subunit 5A family. As to quaternary structure, component of the cytochrome c oxidase (complex IV, CIV), a multisubunit enzyme composed of 14 subunits. The complex is composed of a catalytic core of 3 subunits MT-CO1, MT-CO2 and MT-CO3, encoded in the mitochondrial DNA, and 11 supernumerary subunits COX4I1 (or COX4I2), COX5A, COX5B, COX6A1 (or COX6A2), COX6B1 (or COX6B2), COX6C, COX7A2 (or COX7A1), COX7B, COX7C, COX8A and NDUFA4, which are encoded in the nuclear genome. The complex exists as a monomer or a dimer and forms supercomplexes (SCs) in the inner mitochondrial membrane with NADH-ubiquinone oxidoreductase (complex I, CI) and ubiquinol-cytochrome c oxidoreductase (cytochrome b-c1 complex, complex III, CIII), resulting in different assemblies (supercomplex SCI(1)III(2)IV(1) and megacomplex MCI(2)III(2)IV(2)). Interacts with AFG1L. Interacts with RAB5IF. In response to mitochondrial stress, the precursor protein is ubiquitinated by the SIFI complex in the cytoplasm before mitochondrial import, leading to its degradation. Within the SIFI complex, UBR4 initiates ubiquitin chain that are further elongated or branched by KCMF1.

It is found in the mitochondrion inner membrane. It participates in energy metabolism; oxidative phosphorylation. In terms of biological role, component of the cytochrome c oxidase, the last enzyme in the mitochondrial electron transport chain which drives oxidative phosphorylation. The respiratory chain contains 3 multisubunit complexes succinate dehydrogenase (complex II, CII), ubiquinol-cytochrome c oxidoreductase (cytochrome b-c1 complex, complex III, CIII) and cytochrome c oxidase (complex IV, CIV), that cooperate to transfer electrons derived from NADH and succinate to molecular oxygen, creating an electrochemical gradient over the inner membrane that drives transmembrane transport and the ATP synthase. Cytochrome c oxidase is the component of the respiratory chain that catalyzes the reduction of oxygen to water. Electrons originating from reduced cytochrome c in the intermembrane space (IMS) are transferred via the dinuclear copper A center (CU(A)) of subunit 2 and heme A of subunit 1 to the active site in subunit 1, a binuclear center (BNC) formed by heme A3 and copper B (CU(B)). The BNC reduces molecular oxygen to 2 water molecules using 4 electrons from cytochrome c in the IMS and 4 protons from the mitochondrial matrix. The chain is Cytochrome c oxidase subunit 5A, mitochondrial (COX5A) from Homo sapiens (Human).